Consider the following 804-residue polypeptide: Phenylalanine--tRNA ligase beta subunit (804 aa).

Residues 40-161 enclose the tRNA-binding domain; sequence FSMIDYLIIG…KANLGDTEVY (122 aa). The 74-residue stretch at 413–486 folds into the B5 domain; the sequence is EYHQQVKVNY…KILNINLFQP (74 aa). Mg(2+)-binding residues include D464, D470, E473, and E474. The 95-residue stretch at 710-804 folds into the FDX-ACB domain; it reads DHYQEVTRDI…DLMKTKQILI (95 aa).

The protein belongs to the phenylalanyl-tRNA synthetase beta subunit family. Type 1 subfamily. As to quaternary structure, tetramer of two alpha and two beta subunits. Mg(2+) serves as cofactor.

Its subcellular location is the cytoplasm. It carries out the reaction tRNA(Phe) + L-phenylalanine + ATP = L-phenylalanyl-tRNA(Phe) + AMP + diphosphate + H(+). This Mycoplasmoides gallisepticum (strain R(low / passage 15 / clone 2)) (Mycoplasma gallisepticum) protein is Phenylalanine--tRNA ligase beta subunit.